The sequence spans 710 residues: Aminopeptidase P2 (710 aa).

The transit peptide at 1 to 79 (MIPLTLSSPS…IRKAQTKVVV (79 aa)) directs the protein to the chloroplast. A peptide-binding residues include R147 and H486. Mn(2+) contacts are provided by D506, D517, and H580. A peptide-binding residues include H580, H589, and E614. 2 residues coordinate Mn(2+): E614 and E628.

Belongs to the peptidase M24B family. Homodimer. Requires Mn(2+) as cofactor.

The protein localises to the plastid. It is found in the chloroplast. It carries out the reaction Release of any N-terminal amino acid, including proline, that is linked to proline, even from a dipeptide or tripeptide.. In terms of biological role, catalyzes the removal of a penultimate prolyl residue from the N-termini of peptides, such as Arg-Pro-Pro. This is Aminopeptidase P2 from Arabidopsis thaliana (Mouse-ear cress).